The chain runs to 425 residues: Transmembrane protein 184A (425 aa).

7 consecutive transmembrane segments (helical) span residues 51-71, 96-116, 133-153, 189-209, 226-246, 261-281, and 303-323; these read LFLT…TALL, LLFI…LLGG, FVIY…SAIM, TLQF…LQAF, VTLV…LFYF, FLTI…LAIL, and LAAG…SLAL. The segment at 375–425 is disordered; sequence QYTQQSTHEAPGPGQGGHPSPSTHPGPASGSGGGKKSRNIEKRMLIPSEDL. Positions 392 to 402 are enriched in low complexity; that stretch reads HPSPSTHPGPA.

The protein belongs to the TMEM184 family. In terms of tissue distribution, expressed in vascular cells (at protein level).

It localises to the cell membrane. The protein localises to the cytoplasm. It is found in the perinuclear region. Its subcellular location is the early endosome membrane. The protein resides in the endosome. It localises to the cytoplasmic vesicle. The protein localises to the secretory vesicle membrane. It is found in the cytoplasmic vesicle membrane. Acts as a heparin receptor in vascular cells. May be involved in vesicle transport in exocrine cells and Sertoli cells. This chain is Transmembrane protein 184A (Tmem184a), found in Rattus norvegicus (Rat).